Reading from the N-terminus, the 208-residue chain is Holliday junction branch migration complex subunit RuvA (208 aa).

Positions 1-64 are domain I; sequence MIGKLKGIVD…EDMIRLYGFR (64 aa). The interval 65–143 is domain II; sequence VDAEREWFRL…AFAPIDPALI (79 aa). Residues 144 to 152 form a flexible linker region; the sequence is ALTGAVEDR. The domain III stretch occupies residues 153-208; sequence TAPQPVADAISALVNLGYAQIQASAAIAAALKGLGEEAGTVEAKTLIRLGLRELAR.

The protein belongs to the RuvA family. In terms of assembly, homotetramer. Forms an RuvA(8)-RuvB(12)-Holliday junction (HJ) complex. HJ DNA is sandwiched between 2 RuvA tetramers; dsDNA enters through RuvA and exits via RuvB. An RuvB hexamer assembles on each DNA strand where it exits the tetramer. Each RuvB hexamer is contacted by two RuvA subunits (via domain III) on 2 adjacent RuvB subunits; this complex drives branch migration. In the full resolvosome a probable DNA-RuvA(4)-RuvB(12)-RuvC(2) complex forms which resolves the HJ.

It localises to the cytoplasm. Functionally, the RuvA-RuvB-RuvC complex processes Holliday junction (HJ) DNA during genetic recombination and DNA repair, while the RuvA-RuvB complex plays an important role in the rescue of blocked DNA replication forks via replication fork reversal (RFR). RuvA specifically binds to HJ cruciform DNA, conferring on it an open structure. The RuvB hexamer acts as an ATP-dependent pump, pulling dsDNA into and through the RuvAB complex. HJ branch migration allows RuvC to scan DNA until it finds its consensus sequence, where it cleaves and resolves the cruciform DNA. The polypeptide is Holliday junction branch migration complex subunit RuvA (Methylorubrum extorquens (strain CM4 / NCIMB 13688) (Methylobacterium extorquens)).